A 1343-amino-acid chain; its full sequence is DNA-directed RNA polymerase subunit beta (1343 aa).

This sequence belongs to the RNA polymerase beta chain family. In terms of assembly, the RNAP catalytic core consists of 2 alpha, 1 beta, 1 beta' and 1 omega subunit. When a sigma factor is associated with the core the holoenzyme is formed, which can initiate transcription.

It catalyses the reaction RNA(n) + a ribonucleoside 5'-triphosphate = RNA(n+1) + diphosphate. DNA-dependent RNA polymerase catalyzes the transcription of DNA into RNA using the four ribonucleoside triphosphates as substrates. The polypeptide is DNA-directed RNA polymerase subunit beta (Buchnera aphidicola subsp. Cinara cedri (strain Cc)).